The chain runs to 954 residues: Valine--tRNA ligase (954 aa).

A 'HIGH' region motif is present at residues P48–H58. The short motif at K560 to S564 is the 'KMSKS' region element. Residue K563 coordinates ATP. A coiled-coil region spans residues I886–L954.

The protein belongs to the class-I aminoacyl-tRNA synthetase family. ValS type 1 subfamily. Monomer.

Its subcellular location is the cytoplasm. The catalysed reaction is tRNA(Val) + L-valine + ATP = L-valyl-tRNA(Val) + AMP + diphosphate. Its function is as follows. Catalyzes the attachment of valine to tRNA(Val). As ValRS can inadvertently accommodate and process structurally similar amino acids such as threonine, to avoid such errors, it has a 'posttransfer' editing activity that hydrolyzes mischarged Thr-tRNA(Val) in a tRNA-dependent manner. The chain is Valine--tRNA ligase from Mannheimia succiniciproducens (strain KCTC 0769BP / MBEL55E).